The following is a 533-amino-acid chain: Tyrosinase (533 aa).

Positions 1-18 are cleaved as a signal peptide; it reads MFLAVLYCLLWSFQISDG. Residues 19–476 lie on the Lumenal, melanosome side of the membrane; that stretch reads HFPRACASSK…YLEQASRIWP (458 aa). N-linked (GlcNAc...) asparagine glycosylation is found at asparagine 86, asparagine 111, and asparagine 161. Residues histidine 180, histidine 202, and histidine 211 each contribute to the Cu cation site. N-linked (GlcNAc...) asparagine glycosylation is found at asparagine 230 and asparagine 337. Cu cation is bound by residues histidine 363 and histidine 367. The N-linked (GlcNAc...) asparagine glycan is linked to asparagine 371. Histidine 390 contacts Cu cation. A helical transmembrane segment spans residues 477–497; the sequence is WLLGAALVGAVIAAALSGLSS. Residues 498-533 lie on the Cytoplasmic side of the membrane; it reads RLCLQKKKKKKQPQEERQPLLMDKDDYHSLLYQSHL.

The protein belongs to the tyrosinase family. Forms an OPN3-dependent complex with DCT in response to blue light in melanocytes. It depends on Cu(2+) as a cofactor. Post-translationally, glycosylated. In terms of tissue distribution, expressed in the skin.

The protein localises to the melanosome membrane. Its subcellular location is the melanosome. It carries out the reaction 2 L-dopa + O2 = 2 L-dopaquinone + 2 H2O. The enzyme catalyses L-tyrosine + O2 = L-dopaquinone + H2O. It catalyses the reaction 2 5,6-dihydroxyindole-2-carboxylate + O2 = 2 indole-5,6-quinone-2-carboxylate + 2 H2O. This is a copper-containing oxidase that functions in the formation of pigments such as melanins and other polyphenolic compounds. Catalyzes the initial and rate limiting step in the cascade of reactions leading to melanin production from tyrosine. In addition to hydroxylating tyrosine to DOPA (3,4-dihydroxyphenylalanine), also catalyzes the oxidation of DOPA to DOPA-quinone, and possibly the oxidation of DHI (5,6-dihydroxyindole) to indole-5,6 quinone. The protein is Tyrosinase (Tyr) of Mus musculus (Mouse).